The following is a 547-amino-acid chain: Probable protein kinase UbiB (547 aa).

Residues 121 to 501 enclose the Protein kinase domain; it reads EFSPDPMASA…QLRSERRWRR (381 aa). ATP-binding positions include 127 to 135 and Lys149; that span reads MASASVAQV. Asp284 (proton acceptor) is an active-site residue. Helical transmembrane passes span 502 to 522 and 523 to 543; these read GFIALVLAGAALVGSQPHAGQ and WLADLPVWSWALLAGAAGVML.

This sequence belongs to the ABC1 family. UbiB subfamily.

Its subcellular location is the cell inner membrane. The protein operates within cofactor biosynthesis; ubiquinone biosynthesis [regulation]. Functionally, is probably a protein kinase regulator of UbiI activity which is involved in aerobic coenzyme Q (ubiquinone) biosynthesis. The polypeptide is Probable protein kinase UbiB (Marinobacter nauticus (strain ATCC 700491 / DSM 11845 / VT8) (Marinobacter aquaeolei)).